Here is a 194-residue protein sequence, read N- to C-terminus: Peptidyl-tRNA hydrolase (194 aa).

Position 16 (Y16) interacts with tRNA. The active-site Proton acceptor is H21. The tRNA site is built by F67, N69, and N115.

This sequence belongs to the PTH family. In terms of assembly, monomer.

Its subcellular location is the cytoplasm. The catalysed reaction is an N-acyl-L-alpha-aminoacyl-tRNA + H2O = an N-acyl-L-amino acid + a tRNA + H(+). Its function is as follows. Hydrolyzes ribosome-free peptidyl-tRNAs (with 1 or more amino acids incorporated), which drop off the ribosome during protein synthesis, or as a result of ribosome stalling. Catalyzes the release of premature peptidyl moieties from peptidyl-tRNA molecules trapped in stalled 50S ribosomal subunits, and thus maintains levels of free tRNAs and 50S ribosomes. This Salmonella dublin (strain CT_02021853) protein is Peptidyl-tRNA hydrolase.